A 354-amino-acid polypeptide reads, in one-letter code: Holliday junction branch migration complex subunit RuvB (354 aa).

Residues 1–22 (MTLQTDDFAPAPARRVVSAAPA) are disordered. The tract at residues 5-194 (TDDFAPAPAR…FGIVARLEFY (190 aa)) is large ATPase domain (RuvB-L). A compositionally biased stretch (low complexity) spans 9–22 (APAPARRVVSAAPA). ATP contacts are provided by residues Leu-33, Arg-34, Gly-75, Lys-78, Thr-79, Thr-80, 141 to 143 (EDY), Arg-184, Tyr-194, and Arg-231. Thr-79 provides a ligand contact to Mg(2+). The interval 195–265 (SAQELARIVK…IAERALAMLD (71 aa)) is small ATPAse domain (RuvB-S). The interval 268 to 354 (PEGLDVMDRK…GAQAPGLFAV (87 aa)) is head domain (RuvB-H). Arg-323 and Arg-328 together coordinate DNA.

It belongs to the RuvB family. As to quaternary structure, homohexamer. Forms an RuvA(8)-RuvB(12)-Holliday junction (HJ) complex. HJ DNA is sandwiched between 2 RuvA tetramers; dsDNA enters through RuvA and exits via RuvB. An RuvB hexamer assembles on each DNA strand where it exits the tetramer. Each RuvB hexamer is contacted by two RuvA subunits (via domain III) on 2 adjacent RuvB subunits; this complex drives branch migration. In the full resolvosome a probable DNA-RuvA(4)-RuvB(12)-RuvC(2) complex forms which resolves the HJ.

It localises to the cytoplasm. It carries out the reaction ATP + H2O = ADP + phosphate + H(+). Functionally, the RuvA-RuvB-RuvC complex processes Holliday junction (HJ) DNA during genetic recombination and DNA repair, while the RuvA-RuvB complex plays an important role in the rescue of blocked DNA replication forks via replication fork reversal (RFR). RuvA specifically binds to HJ cruciform DNA, conferring on it an open structure. The RuvB hexamer acts as an ATP-dependent pump, pulling dsDNA into and through the RuvAB complex. RuvB forms 2 homohexamers on either side of HJ DNA bound by 1 or 2 RuvA tetramers; 4 subunits per hexamer contact DNA at a time. Coordinated motions by a converter formed by DNA-disengaged RuvB subunits stimulates ATP hydrolysis and nucleotide exchange. Immobilization of the converter enables RuvB to convert the ATP-contained energy into a lever motion, pulling 2 nucleotides of DNA out of the RuvA tetramer per ATP hydrolyzed, thus driving DNA branch migration. The RuvB motors rotate together with the DNA substrate, which together with the progressing nucleotide cycle form the mechanistic basis for DNA recombination by continuous HJ branch migration. Branch migration allows RuvC to scan DNA until it finds its consensus sequence, where it cleaves and resolves cruciform DNA. In Verminephrobacter eiseniae (strain EF01-2), this protein is Holliday junction branch migration complex subunit RuvB.